A 253-amino-acid chain; its full sequence is Protein PET20, mitochondrial (253 aa).

A mitochondrion-targeting transit peptide spans 1-36; sequence MLKLARPFIPPLSRNNAISSGIVLTSRRFQSSFTFL. Residues 44–93 are disordered; the sequence is KNQMKSKRKKGSKKAAYHRQPPEHEHTAPLIKQNKTITKKEHSDVRGSHL. Residues 47–60 are compositionally biased toward basic residues; sequence MKSKRKKGSKKAAY. Residues 81–90 show a composition bias toward basic and acidic residues; it reads TKKEHSDVRG.

The protein resides in the mitochondrion. Its function is as follows. Required for respiratory growth, stability of the mitochondrial genome and for proper assembly or maintenance of mitochondrial proteins. This Saccharomyces cerevisiae (strain ATCC 204508 / S288c) (Baker's yeast) protein is Protein PET20, mitochondrial (PET20).